The sequence spans 342 residues: Aquaporin-7 (342 aa).

Over 1–36 (MVQTSRHRRSTRGSKMVSWSVMAKIQEILQKKMVRE) the chain is Cytoplasmic. Ser20 carries the phosphoserine modification. The helical transmembrane segment at 37–54 (FLAEFMSTYVMMVFGLGS) threads the bilayer. Over 55–67 (VAHMVLNKKYGSY) the chain is Extracellular. The chain crosses the membrane as a helical span at residues 68–85 (LGVNLGFGFGVTMGVHVA). At 86 to 89 (GHIS) the chain is on the cytoplasmic side. The segment at residues 90 to 103 (GAHMNAAVTFANCA) is an intramembrane region (discontinuously helical). An NPA 1 motif is present at residues 94 to 96 (NAA). Over 104 to 111 (LGRVPWRK) the chain is Cytoplasmic. The helical transmembrane segment at 112 to 132 (FPVYVLGQFLGSFLAAATIYT) threads the bilayer. Residues 133–167 (LFYTAILHFSGGQLMVTGPVATAGIFATYLPDHMT) lie on the Extracellular side of the membrane. The chain crosses the membrane as a helical span at residues 168-188 (LWRGFLNEAWLTGMLQLCLFA). Residues 189 to 200 (ITDQENNAALPG) are Cytoplasmic-facing. The helical transmembrane segment at 201-217 (TQALVIGILVVIIGVSL) threads the bilayer. Topologically, residues 218–221 (GMNT) are extracellular. Positions 222–235 (GYAINPSRDLPPRV) form an intramembrane region, discontinuously helical. An NPA 2 motif is present at residues 226–228 (NPS). At 236–253 (FTFIAGWGKEVFSEGENW) the chain is on the extracellular side. A helical membrane pass occupies residues 254–275 (WWVPVVAPLLGACLGGIIYLVF). The Cytoplasmic portion of the chain corresponds to 276-342 (IGSTTPREPL…LHESMALGHF (67 aa)).

This sequence belongs to the MIP/aquaporin (TC 1.A.8) family. Homotetramer; each monomer provides an independent glycerol/water pore. Two homotetramers on opposing membranes can dimerize, forming a cell-cell junction. Interacts with PLIN1. In terms of processing, phosphorylation by PKA could prevent the interaction with PLIN1.

The protein resides in the cell membrane. The protein localises to the cytoplasmic vesicle membrane. Its subcellular location is the lipid droplet. It carries out the reaction glycerol(in) = glycerol(out). The enzyme catalyses H2O(in) = H2O(out). The catalysed reaction is urea(in) = urea(out). Its activity is regulated as follows. Glycerol transport is regulated by pH, with the porin being permeable to glycerol at pH 7.4 but not at pH 5.5. Water permeability, however, is not influenced by pH. In terms of biological role, aquaglyceroporins form homotetrameric transmembrane channels, with each monomer independently mediating glycerol and water transport across the plasma membrane along their osmotic gradient. Could also be permeable to urea. Mediates the efflux of glycerol, formed upon triglyceride hydrolysis, to avoid its accumulation in adipocytes and to make it available to other tissues. In the kidney, mediates the reabsorption of glycerol, preventing its loss in urine, again participating to energy homeostasis. In pancreatic beta cells, it also mediates the efflux of glycerol, regulating its intracellular levels. This Macaca fascicularis (Crab-eating macaque) protein is Aquaporin-7 (AQP7).